A 569-amino-acid polypeptide reads, in one-letter code: CTP synthase (569 aa).

An amidoligase domain region spans residues 1–276 (MNQATPTKHV…DAYLVRRLDL (276 aa)). S18 is a CTP binding site. S18 serves as a coordination point for UTP. ATP-binding positions include 19 to 24 (SLGKGL) and D76. Residues D76 and E150 each contribute to the Mg(2+) site. Residues 157–159 (DIE), 197–202 (KTKPTQ), and K233 each bind CTP. UTP contacts are provided by residues 197–202 (KTKPTQ) and K233. One can recognise a Glutamine amidotransferase type-1 domain in the interval 301–550 (TVALVGKYVD…VGAAIERQRE (250 aa)). Position 364 (G364) interacts with L-glutamine. C391 (nucleophile; for glutamine hydrolysis) is an active-site residue. L-glutamine contacts are provided by residues 392–395 (LGLQ), E415, and R476. Catalysis depends on residues H523 and E525.

The protein belongs to the CTP synthase family. Homotetramer.

The catalysed reaction is UTP + L-glutamine + ATP + H2O = CTP + L-glutamate + ADP + phosphate + 2 H(+). It carries out the reaction L-glutamine + H2O = L-glutamate + NH4(+). The enzyme catalyses UTP + NH4(+) + ATP = CTP + ADP + phosphate + 2 H(+). Its pathway is pyrimidine metabolism; CTP biosynthesis via de novo pathway; CTP from UDP: step 2/2. With respect to regulation, allosterically activated by GTP, when glutamine is the substrate; GTP has no effect on the reaction when ammonia is the substrate. The allosteric effector GTP functions by stabilizing the protein conformation that binds the tetrahedral intermediate(s) formed during glutamine hydrolysis. Inhibited by the product CTP, via allosteric rather than competitive inhibition. In terms of biological role, catalyzes the ATP-dependent amination of UTP to CTP with either L-glutamine or ammonia as the source of nitrogen. Regulates intracellular CTP levels through interactions with the four ribonucleotide triphosphates. This is CTP synthase from Nocardioides sp. (strain ATCC BAA-499 / JS614).